The sequence spans 283 residues: Polyamine aminopropyltransferase (283 aa).

The 234-residue stretch at 5–238 (TTWIDEYHKG…GIWSWTFASS (234 aa)) folds into the PABS domain. Glutamine 32 is a binding site for S-methyl-5'-thioadenosine. The spermidine site is built by histidine 63 and aspartate 87. S-methyl-5'-thioadenosine-binding positions include glutamate 107 and 139–140 (DG). Catalysis depends on aspartate 158, which acts as the Proton acceptor. A spermidine-binding site is contributed by 158–161 (DSSD).

This sequence belongs to the spermidine/spermine synthase family. In terms of assembly, homodimer or homotetramer.

It localises to the cytoplasm. It catalyses the reaction S-adenosyl 3-(methylsulfanyl)propylamine + putrescine = S-methyl-5'-thioadenosine + spermidine + H(+). The protein operates within amine and polyamine biosynthesis; spermidine biosynthesis; spermidine from putrescine: step 1/1. Functionally, catalyzes the irreversible transfer of a propylamine group from the amino donor S-adenosylmethioninamine (decarboxy-AdoMet) to putrescine (1,4-diaminobutane) to yield spermidine. The sequence is that of Polyamine aminopropyltransferase from Prochlorococcus marinus (strain MIT 9215).